The chain runs to 312 residues: Transcription initiation factor IIB (312 aa).

The TFIIB-type zinc finger occupies 10–42; sequence FVQTCSDCGETQNIVEDYKNGYHVCGRCGCIVG. Positions 14, 17, 34, and 37 each coordinate Zn(2+). Repeat copies occupy residues 120–196 and 213–290.

This sequence belongs to the TFIIB family. Associates with TFIID-IIA (DA complex) to form TFIID-IIA-IIB (DAB-complex) which is then recognized by polymerase II.

The protein localises to the nucleus. General factor that plays a major role in the activation of eukaryotic genes transcribed by RNA polymerase II. This is Transcription initiation factor IIB from Encephalitozoon cuniculi (strain GB-M1) (Microsporidian parasite).